Here is a 55-residue protein sequence, read N- to C-terminus: Preprotein translocase subunit SecG (55 aa).

Residues 1–31 (MPKNNTNENFQSGAGLIRYFNEEEIKGPALD) are Cytoplasmic-facing. Residues 32–51 (PKLIIYIGIAMAVIVELAKI) traverse the membrane as a helical segment. The Extracellular portion of the chain corresponds to 52–55 (FWPV).

The protein belongs to the SEC61-beta family. Component of the protein translocase complex. Heterotrimer consisting of alpha (SecY), beta (SecG) and gamma (SecE) subunits. Can form oligomers of the heterotrimer.

Its subcellular location is the cell membrane. Functionally, involved in protein export. The function of the beta subunit is unknown, but it may be involved in stabilization of the trimeric complex. In Picrophilus torridus (strain ATCC 700027 / DSM 9790 / JCM 10055 / NBRC 100828 / KAW 2/3), this protein is Preprotein translocase subunit SecG.